Here is a 314-residue protein sequence, read N- to C-terminus: Olfactory receptor 5B3 (314 aa).

The Extracellular portion of the chain corresponds to 1-23; sequence MENKTEVTQFILLGLTNDSELQV. N-linked (GlcNAc...) asparagine glycosylation is found at Asn3 and Asn17. Residues 24–44 traverse the membrane as a helical segment; the sequence is PLFITFPFIYIITLVGNLGII. The Cytoplasmic segment spans residues 45–52; the sequence is VLIFWDSC. Residues 53–73 traverse the membrane as a helical segment; the sequence is LHNPMYFFLSNLSLVDFCYSS. The Extracellular portion of the chain corresponds to 74–97; the sequence is AVTPIVMAGFLIEDKVISYNACAA. A disulfide bond links Cys95 and Cys187. The chain crosses the membrane as a helical span at residues 98-118; it reads QMYIFVAFATVENYLLASMAY. The Cytoplasmic portion of the chain corresponds to 119–131; the sequence is DRYAAVCKPLHYT. A helical membrane pass occupies residues 132–152; that stretch reads TTMTTTVCARLAIGSYLCGFL. Residue Asn153 is glycosylated (N-linked (GlcNAc...) asparagine). At 153–194 the chain is on the extracellular side; the sequence is NASIHTGDTFSLSFCKSNEVHHFFCDIPAVMVLSCSDRHISE. Residues 195-215 form a helical membrane-spanning segment; it reads LVLIYVVSFNIFIALLVILIS. Topologically, residues 216-235 are cytoplasmic; that stretch reads YTFIFITILKMHSASVYQKP. A helical transmembrane segment spans residues 236–256; that stretch reads LSTCASHFIAVGIFYGTIIFM. The Extracellular segment spans residues 257 to 269; it reads YLQPSSSHSMDTD. A helical membrane pass occupies residues 270–290; sequence KMAPVFYTMVIPMLNPLVYSL. At 291 to 314 the chain is on the cytoplasmic side; that stretch reads RNKEVKSAFKKVVEKAKLSVGWSV.

Belongs to the G-protein coupled receptor 1 family.

Its subcellular location is the cell membrane. In terms of biological role, odorant receptor. In Homo sapiens (Human), this protein is Olfactory receptor 5B3 (OR5B3).